The primary structure comprises 717 residues: Catalase-peroxidase (717 aa).

Positions 1–20 (MSGKCPVMHGGNTSTGTSNK) are disordered. A compositionally biased stretch (polar residues) spans 11–20 (GNTSTGTSNK). The segment at residues 91–219 (WHSAGSYRLA…LAAVQMGLIY (129 aa)) is a cross-link (tryptophyl-tyrosyl-methioninium (Trp-Tyr) (with M-245)). Histidine 92 serves as the catalytic Proton acceptor. The tryptophyl-tyrosyl-methioninium (Tyr-Met) (with W-91) cross-link spans 219-245 (YVNPEGVNGQPDPQKTAEQVRETFARM). Heme b is bound at residue histidine 260.

Belongs to the peroxidase family. Peroxidase/catalase subfamily. In terms of assembly, homodimer or homotetramer. Heme b serves as cofactor. Formation of the three residue Trp-Tyr-Met cross-link is important for the catalase, but not the peroxidase activity of the enzyme.

It catalyses the reaction H2O2 + AH2 = A + 2 H2O. The enzyme catalyses 2 H2O2 = O2 + 2 H2O. Bifunctional enzyme with both catalase and broad-spectrum peroxidase activity. The polypeptide is Catalase-peroxidase (Chromohalobacter salexigens (strain ATCC BAA-138 / DSM 3043 / CIP 106854 / NCIMB 13768 / 1H11)).